The sequence spans 90 residues: Probable Fe(2+)-trafficking protein (90 aa).

Belongs to the Fe(2+)-trafficking protein family.

Its function is as follows. Could be a mediator in iron transactions between iron acquisition and iron-requiring processes, such as synthesis and/or repair of Fe-S clusters in biosynthetic enzymes. The chain is Probable Fe(2+)-trafficking protein from Albidiferax ferrireducens (strain ATCC BAA-621 / DSM 15236 / T118) (Rhodoferax ferrireducens).